A 213-amino-acid polypeptide reads, in one-letter code: Orotate phosphoribosyltransferase (213 aa).

Residue Lys26 participates in 5-phospho-alpha-D-ribose 1-diphosphate binding. 34-35 provides a ligand contact to orotate; that stretch reads FF. 5-phospho-alpha-D-ribose 1-diphosphate-binding positions include 72–73, Arg99, Lys100, Lys103, His105, and 124–132; these read YK and DDVITAGTA. 2 residues coordinate orotate: Thr128 and Arg156.

This sequence belongs to the purine/pyrimidine phosphoribosyltransferase family. PyrE subfamily. As to quaternary structure, homodimer. The cofactor is Mg(2+).

The enzyme catalyses orotidine 5'-phosphate + diphosphate = orotate + 5-phospho-alpha-D-ribose 1-diphosphate. It participates in pyrimidine metabolism; UMP biosynthesis via de novo pathway; UMP from orotate: step 1/2. Functionally, catalyzes the transfer of a ribosyl phosphate group from 5-phosphoribose 1-diphosphate to orotate, leading to the formation of orotidine monophosphate (OMP). The protein is Orotate phosphoribosyltransferase of Alteromonas mediterranea (strain DSM 17117 / CIP 110805 / LMG 28347 / Deep ecotype).